A 208-amino-acid polypeptide reads, in one-letter code: Interferon epsilon (208 aa).

A signal peptide spans 1–21 (MIIKHFFGTVLVLLASTTIFS). Cysteines 53 and 163 form a disulfide. N-linked (GlcNAc...) asparagine glycosylation is found at N95 and N104.

This sequence belongs to the alpha/beta interferon family. As to expression, endometrium-specific.

It localises to the secreted. Functionally, type I interferon required for maintaining basal levels of IFN-regulated genes, including 2'-5'-oligoadenylate synthetase, IRF7 and ISG15, in the female reproductive tract. Directly mediates protection against viral and bacterial genital infections. The sequence is that of Interferon epsilon (IFNE) from Homo sapiens (Human).